We begin with the raw amino-acid sequence, 475 residues long: Chromosomal replication initiator protein DnaA (475 aa).

The tract at residues 1–73 (MSDIEQERWS…LACWQAELPD (73 aa)) is domain I, interacts with DnaA modulators. Residues 73 to 131 (DVHRIDLMVRSAMRCAAPAKEAPAADPRRPEHGDGRASTELKMVATAPASANHDALGGS) form a domain II region. Residues 132 to 354 (PLDPRLTFAS…GAINRLLAHS (223 aa)) form a domain III, AAA+ region region. ATP-binding residues include G179, G181, K182, and T183. Residues 355–475 (KLNAQPVTLE…VELLKRQLQE (121 aa)) are domain IV, binds dsDNA.

It belongs to the DnaA family. In terms of assembly, oligomerizes as a right-handed, spiral filament on DNA at oriC.

The protein localises to the cytoplasm. Its function is as follows. Plays an essential role in the initiation and regulation of chromosomal replication. ATP-DnaA binds to the origin of replication (oriC) to initiate formation of the DNA replication initiation complex once per cell cycle. Binds the DnaA box (a 9 base pair repeat at the origin) and separates the double-stranded (ds)DNA. Forms a right-handed helical filament on oriC DNA; dsDNA binds to the exterior of the filament while single-stranded (ss)DNA is stabiized in the filament's interior. The ATP-DnaA-oriC complex binds and stabilizes one strand of the AT-rich DNA unwinding element (DUE), permitting loading of DNA polymerase. After initiation quickly degrades to an ADP-DnaA complex that is not apt for DNA replication. Binds acidic phospholipids. This Nitrobacter hamburgensis (strain DSM 10229 / NCIMB 13809 / X14) protein is Chromosomal replication initiator protein DnaA.